The chain runs to 69 residues: Small cysteine-rich protein (69 aa).

A signal peptide spans 1–19; it reads MKLQLCLVLLLLGVLYVQS. The propeptide occupies 20–22; sequence VPE.

It belongs to the Cnidaria small cysteine-rich protein (SCRiP) family. delta subfamily. Post-translationally, contains 4 disulfide bonds.

Its subcellular location is the secreted. It is found in the nematocyst. Induces neurotoxic symptoms on zebrafish. Has also been claimed to be implied in calcification, but this function seems improbable. This Metridium senile (Brown sea anemone) protein is Small cysteine-rich protein.